The sequence spans 660 residues: WD repeat-containing protein 48 homolog (660 aa).

8 WD repeats span residues 23-78 (MHRS…RDLH), 84-120 (HHTD…CMST), 123-162 (THRD…KLTA), 174-213 (GNKD…KLMK), 216-255 (GHTD…CISS), 258-297 (CHSE…TAQL), 300-341 (IEDA…ISVE), and 362-401 (PGAA…KVCD).

Belongs to the WD repeat WDR48 family.

In terms of biological role, regulator of deubiquitinating complexes. Activates deubiquitination by increasing the catalytic turnover without increasing the affinity of deubiquitinating enzymes for the substrate. The polypeptide is WD repeat-containing protein 48 homolog (Brugia malayi (Filarial nematode worm)).